The primary structure comprises 716 residues: Zinc finger CCCH domain-containing protein 30 (716 aa).

2 ANK repeats span residues 90 to 120 and 125 to 157; these read DYRT…DVNR and DQTT…DLNL. A disordered region spans residues 201–231; that stretch reads VTNVPNRSSSPCHSPTGENGGSGSGSPLGSP. Over residues 203–213 the composition is skewed to polar residues; sequence NVPNRSSSPCH. 2 consecutive C3H1-type zinc fingers follow at residues 306-328 and 336-360; these read PCPD…HGVF and QYRT…HTPE. The segment at 521–562 is disordered; it reads FQQQQQQQQSMLSPINTSFSSPKSVDHSLFSGGGRMSPRNVV. A compositionally biased stretch (polar residues) spans 530–543; the sequence is SMLSPINTSFSSPK. Serine 566 carries the phosphoserine modification. The segment covering 583–594 has biased composition (low complexity); sequence QQQQQQQQQQHQ. Disordered stretches follow at residues 583–638 and 667–692; these read QQQQ…MSSE and PAEA…PVEP. The segment covering 605–630 has biased composition (polar residues); it reads TNSSPIVGSPVNNNTWSSKWGSSNGQ.

The sequence is that of Zinc finger CCCH domain-containing protein 30 from Arabidopsis thaliana (Mouse-ear cress).